Reading from the N-terminus, the 513-residue chain is GMP synthase [glutamine-hydrolyzing] (513 aa).

The Glutamine amidotransferase type-1 domain maps to 8–198 (MILVLDFGSQ…VFGVCECEGE (191 aa)). Cys85 serves as the catalytic Nucleophile. Active-site residues include His172 and Glu174. The GMPS ATP-PPase domain occupies 199–388 (WSMENFIEIE…LGIPDEIVWR (190 aa)). ATP is bound at residue 227-233 (GGVDSSV).

Homodimer.

It carries out the reaction XMP + L-glutamine + ATP + H2O = GMP + L-glutamate + AMP + diphosphate + 2 H(+). It functions in the pathway purine metabolism; GMP biosynthesis; GMP from XMP (L-Gln route): step 1/1. Functionally, catalyzes the synthesis of GMP from XMP. The chain is GMP synthase [glutamine-hydrolyzing] (guaA) from Bacillus subtilis (strain 168).